Reading from the N-terminus, the 129-residue chain is Calcitonin gene-related peptide 2 (129 aa).

The N-terminal stretch at 1–25 (MGFGKPSSFLAFSILVLCQAGSLQA) is a signal peptide. Positions 26 to 81 (QPLRSSLESLPDPAALSEKEGRLLLAALVKAYVQRKTNELEQEQEQEMEGSSLTAQ) are excised as a propeptide. A disulfide bridge connects residues Cys-85 and Cys-90. A Phenylalanine amide modification is found at Phe-120. Residues 126-129 (DLQA) constitute a propeptide that is removed on maturation.

This sequence belongs to the calcitonin family.

Its subcellular location is the secreted. Functionally, CALCB/CGRP2 is a peptide hormone that induces vasodilation mediated by the CALCRL-RAMP1 receptor complex. Dilates a variety of vessels including the coronary, cerebral and systemic vasculature. Its abundance in the CNS also points toward a neurotransmitter or neuromodulator role. The sequence is that of Calcitonin gene-related peptide 2 (CALCB) from Equus caballus (Horse).